Consider the following 450-residue polypeptide: 3-phosphoshikimate 1-carboxyvinyltransferase (450 aa).

Residues Lys23, Ser24, and Arg28 each coordinate 3-phosphoshikimate. Lys23 is a binding site for phosphoenolpyruvate. Phosphoenolpyruvate-binding residues include Gly96 and Arg124. 3-phosphoshikimate-binding residues include Ser167, Ser168, Gln169, Ser196, Glu311, and His340. Residue Gln169 coordinates phosphoenolpyruvate. The active-site Proton acceptor is Glu311. Phosphoenolpyruvate-binding residues include Arg344, Arg385, and Lys410. The segment at 426–450 is disordered; it reads GQGWGYPQPRSGQRARRATGQGSGG.

Belongs to the EPSP synthase family. Monomer.

Its subcellular location is the cytoplasm. The enzyme catalyses 3-phosphoshikimate + phosphoenolpyruvate = 5-O-(1-carboxyvinyl)-3-phosphoshikimate + phosphate. It functions in the pathway metabolic intermediate biosynthesis; chorismate biosynthesis; chorismate from D-erythrose 4-phosphate and phosphoenolpyruvate: step 6/7. Catalyzes the transfer of the enolpyruvyl moiety of phosphoenolpyruvate (PEP) to the 5-hydroxyl of shikimate-3-phosphate (S3P) to produce enolpyruvyl shikimate-3-phosphate and inorganic phosphate. In Mycobacterium tuberculosis (strain ATCC 25177 / H37Ra), this protein is 3-phosphoshikimate 1-carboxyvinyltransferase.